Here is an 83-residue protein sequence, read N- to C-terminus: uncharacterized protein (83 aa).

A helical membrane pass occupies residues 58-80 (YWGYGAAYGISLGLIAGVALAGL).

It localises to the membrane. This is an uncharacterized protein from Bacillus subtilis (strain 168).